The primary structure comprises 1801 residues: Laminin subunit beta-2 (1801 aa).

Positions 1-35 are cleaved as a signal peptide; the sequence is MEWASGKPGRGRQGQPVPWELRLGLLLSVLAATLA. Residues 46–285 form the Laminin N-terminal domain; sequence SRGSCYPATG…ALYELVIRGN (240 aa). A glycan (N-linked (GlcNAc...) asparagine) is linked at Asn251. Intrachain disulfides connect Cys286/Cys295, Cys288/Cys313, Cys315/Cys324, Cys327/Cys347, Cys350/Cys359, Cys352/Cys377, Cys380/Cys389, Cys392/Cys410, Cys413/Cys426, Cys415/Cys441, Cys443/Cys452, Cys455/Cys470, Cys473/Cys487, Cys475/Cys494, Cys496/Cys505, Cys508/Cys522, Cys525/Cys537, Cys527/Cys544, and Cys546/Cys555. Laminin EGF-like domains follow at residues 286 to 349, 350 to 412, 413 to 472, and 473 to 524; these read CFCY…ACRK, CECN…ACRP, CDCD…GCQR, and CQCN…GCRP. Asn371 is a glycosylation site (N-linked (GlcNAc...) asparagine). In terms of domain architecture, Laminin EGF-like 5; truncated spans 525 to 555; the sequence is CDCDVGGALDPQCDEATGQCPCRPHMIGRRC. One can recognise a Laminin IV type B domain in the interval 564 to 780; the sequence is RPFLDHLTWE…LLISASSLVY (217 aa). 32 disulfide bridges follow: Cys786-Cys798, Cys788-Cys805, Cys807-Cys816, Cys819-Cys831, Cys834-Cys846, Cys836-Cys853, Cys855-Cys864, Cys867-Cys877, Cys880-Cys889, Cys882-Cys896, Cys899-Cys908, Cys911-Cys927, Cys930-Cys946, Cys932-Cys957, Cys959-Cys968, Cys971-Cys986, Cys989-Cys1003, Cys991-Cys1010, Cys1013-Cys1022, Cys1025-Cys1038, Cys1041-Cys1061, Cys1043-Cys1068, Cys1070-Cys1079, Cys1082-Cys1095, Cys1098-Cys1110, Cys1100-Cys1117, Cys1119-Cys1128, Cys1131-Cys1143, Cys1146-Cys1158, Cys1148-Cys1165, Cys1167-Cys1176, and Cys1179-Cys1190. Laminin EGF-like domains lie at 786 to 833, 834 to 879, 880 to 929, 930 to 988, 989 to 1040, 1041 to 1097, 1098 to 1145, and 1146 to 1192; these read CQCD…GCQA, CQCS…NCRP, CVCN…QCRP, CPCP…RCQL, CECS…SCHR, CTCN…GCQP, CACH…QCRA, and CDCD…ACHP. Asn1088 carries N-linked (GlcNAc...) asparagine glycosylation. Positions 1193 to 1412 are domain II; that stretch reads CHACFGDWDR…LSLTGVNELV (220 aa). An N-linked (GlcNAc...) asparagine glycan is attached at Asn1252. Residues 1259-1306 are a coiled coil; the sequence is AKLVEATEGLRHEIGKTTERLTQLEAELTDVQDENFNANHALSGLERD. N-linked (GlcNAc...) asparagine glycans are attached at residues Asn1311 and Asn1351. Residues 1413-1445 form a domain alpha region; that stretch reads CGAPGDAPCATSPCGGAGCRDEDGQPRCGGLGC. The domain I stretch occupies residues 1446-1801; the sequence is SGAAATADLA…LQVQIYNTCQ (356 aa). Residues 1475–1529 are a coiled coil; that stretch reads GILSRVSETRRQAEEAQQRAQAALDKANASRGQVEQANQELRELIQNVKDFLSQE. N-linked (GlcNAc...) asparagine glycosylation occurs at Asn1502. A Phosphoserine modification is found at Ser1535. Residues 1576–1793 adopt a coiled-coil conformation; that stretch reads LAHTMGDVRR…RSVLQAINLQ (218 aa). Residues 1684 to 1694 show a composition bias toward low complexity; it reads ASTAEETAGSA. The segment at 1684-1703 is disordered; that stretch reads ASTAEETAGSAQSRAREAEK.

As to quaternary structure, laminin is a complex glycoprotein, consisting of three different polypeptide chains (alpha, beta, gamma), which are bound to each other by disulfide bonds into a cross-shaped molecule comprising one long and three short arms with globules at each end. Beta-2 is a subunit of laminin-3 (laminin-121 or S-laminin), laminin-4 (laminin-221 or S-merosin), laminin-7 (laminin-321 or KS-laminin), laminin-9 (laminin-421), laminin-11 (laminin-521), laminin-14 (laminin-423) and laminin-15 (laminin-523). As to expression, found in the basement membranes (major component). S-laminin is concentrated in the synaptic cleft of the neuromuscular junction.

It is found in the secreted. The protein localises to the extracellular space. The protein resides in the extracellular matrix. Its subcellular location is the basement membrane. In terms of biological role, binding to cells via a high affinity receptor, laminin is thought to mediate the attachment, migration and organization of cells into tissues during embryonic development by interacting with other extracellular matrix components. In Rattus norvegicus (Rat), this protein is Laminin subunit beta-2 (Lamb2).